The chain runs to 295 residues: MASMGEKEAVAELYDKVTSNGILEELFGEHLHDGYYEVGTVATISAHRVAVVRIIDEALRFADVFTDDQAKKPRNILDVGCGKGGTCVHMARKYDIQCTGISISPDEIQCAKHLAASQGLENKVSFDVGDALNMRYSDGSFELIFVIQCIEHIQDKEKFIREIVRVAAPGAQIVIISTACRNLSPSEKSLKPKEEKTLKKICNYLHLSGFCSLSDYSNWLTPLPIEDMKIADWTQNAAPFYTLLLREAFSIKGFISLLMNGGWTAVKVILGMKTIHEAIENDLLKIVAVTFRKTK.

An SAM motif I region spans residues 76–85; the sequence is ILDVGCGKGG. Positions 138 to 144 match the Vacuolar targeting signal motif; that stretch reads DGSFELI. Residues 139-147 form an SAM motif II region; it reads GSFELIFVI. Positions 166–175 are SAM motif III; the sequence is VAAPGAQIVI.

This sequence belongs to the class I-like SAM-binding methyltransferase superfamily. gTMT family. As to quaternary structure, homodimer. Mainly expressed in young leaves, and, to a lower extent, in mature leaves, flowers, stems and roots (at protein level). Transcripts levels are highest in flowers, moderate in leaves and low in roots and stems.

It localises to the vacuole membrane. The enzyme catalyses perivine + S-adenosyl-L-methionine = vobasine + S-adenosyl-L-homocysteine + 2 H(+). Its pathway is alkaloid biosynthesis; vindoline biosynthesis. Functionally, S-adenosyl-L-methionine-dependent N-methyltransferase involved in the biosynthesis of biologically active monoterpenoid indole alkaloids (MIAs) natural products including vindoline. Catalyzes the conversion of perivine to Nbeta-methylperivine (vobasine) by methylating its N4 nitrogen. Inactive with picrinine as substrate. The chain is Perivine-Nbeta-methyltransferase from Catharanthus roseus (Madagascar periwinkle).